Reading from the N-terminus, the 310-residue chain is Calbindin-32 (310 aa).

EF-hand domains follow at residues 35–70 (LSANQFMDVWAHYDKDGNGYIEGTELDGFLREFVSS), 84–120 (TMLEELKSCFMEAYDDNQDGKIDIRELAQLLPMEENF), 131–166 (ESSVEFMKIWREYDTDNSGYIEADELKNFLRDLLKE), 177–212 (KLIEYTDTMLQVFDANKDGRLQLSEMAKLLPVKENF), 224–259 (LTKEDIEKVFSLYDRDNSGTIENEELKGFLKDLLEL), and 283–304 (TDKHGKISRKELTMILLTLAKI). Residues Asp-48, Asp-50, Asn-52, Tyr-54, Glu-59, Asp-98, Asn-100, Asp-102, Lys-104, Glu-109, Asp-144, Asp-146, Ser-148, Tyr-150, Glu-155, Asp-190, Asn-192, Asp-194, Arg-196, Glu-201, Asp-237, Asp-239, Ser-241, Thr-243, and Glu-248 each coordinate Ca(2+).

It belongs to the calbindin family. As to expression, expressed in a large number of neuron of the brain and the thoracic ganglion as well as in two small muscles of the thorax.

This Drosophila melanogaster (Fruit fly) protein is Calbindin-32 (Cbp53E).